A 545-amino-acid polypeptide reads, in one-letter code: CTP synthase (545 aa).

Residues 1-266 form an amidoligase domain region; it reads MTHFIFVTGG…DDLICERFGY (266 aa). Position 13 (S13) interacts with CTP. S13 serves as a coordination point for UTP. ATP is bound by residues 14–19 and D71; that span reads SLGKGI. Mg(2+)-binding residues include D71 and E140. CTP-binding positions include 147–149, 187–192, and K223; these read DIE and KTKPTQ. Residues 187-192 and K223 each bind UTP; that span reads KTKPTQ. 239-241 provides a ligand contact to ATP; it reads KDA. The Glutamine amidotransferase type-1 domain maps to 292–543; the sequence is RVAMVGKYVE…IDAAKKQHLK (252 aa). G353 is an L-glutamine binding site. C380 (nucleophile; for glutamine hydrolysis) is an active-site residue. L-glutamine contacts are provided by residues 381–384, E404, and R471; that span reads LGMQ. Residues H516 and E518 contribute to the active site.

Belongs to the CTP synthase family. As to quaternary structure, homotetramer.

It carries out the reaction UTP + L-glutamine + ATP + H2O = CTP + L-glutamate + ADP + phosphate + 2 H(+). The enzyme catalyses L-glutamine + H2O = L-glutamate + NH4(+). The catalysed reaction is UTP + NH4(+) + ATP = CTP + ADP + phosphate + 2 H(+). It functions in the pathway pyrimidine metabolism; CTP biosynthesis via de novo pathway; CTP from UDP: step 2/2. Its activity is regulated as follows. Allosterically activated by GTP, when glutamine is the substrate; GTP has no effect on the reaction when ammonia is the substrate. The allosteric effector GTP functions by stabilizing the protein conformation that binds the tetrahedral intermediate(s) formed during glutamine hydrolysis. Inhibited by the product CTP, via allosteric rather than competitive inhibition. Catalyzes the ATP-dependent amination of UTP to CTP with either L-glutamine or ammonia as the source of nitrogen. Regulates intracellular CTP levels through interactions with the four ribonucleotide triphosphates. This is CTP synthase from Acinetobacter baylyi (strain ATCC 33305 / BD413 / ADP1).